The primary structure comprises 136 residues: Small ribosomal subunit protein uS19 (136 aa).

The protein belongs to the universal ribosomal protein uS19 family.

Protein S19 forms a complex with S13 that binds strongly to the 16S ribosomal RNA. The chain is Small ribosomal subunit protein uS19 (rps19) from Methanothermobacter thermautotrophicus (strain ATCC 29096 / DSM 1053 / JCM 10044 / NBRC 100330 / Delta H) (Methanobacterium thermoautotrophicum).